Here is a 90-residue protein sequence, read N- to C-terminus: U7-theraphotoxin-Hhn1a 1 (90 aa).

The N-terminal stretch at 1 to 19 (MKTAIFTVVLALAVFAVLS) is a signal peptide. The propeptide occupies 20–50 (FGWEANEKALSEEFTELIHEKEAASETEARE). 3 disulfides stabilise this stretch: C51–C65, C58–C70, and C64–C81.

Belongs to the neurotoxin 10 (Hwtx-1) family. 13 (Hntx-13) subfamily. In terms of tissue distribution, expressed by the venom gland.

The protein localises to the secreted. In terms of biological role, ion channel inhibitor. In Cyriopagopus hainanus (Chinese bird spider), this protein is U7-theraphotoxin-Hhn1a 1.